Consider the following 671-residue polypeptide: DNA ligase (671 aa).

NAD(+) contacts are provided by residues 32 to 36 (DAEYD), 81 to 82 (SL), and glutamate 113. Catalysis depends on lysine 115, which acts as the N6-AMP-lysine intermediate. Residues arginine 136, glutamate 173, lysine 290, and lysine 314 each coordinate NAD(+). 4 residues coordinate Zn(2+): cysteine 408, cysteine 411, cysteine 426, and cysteine 432. The 79-residue stretch at 593–671 (EIDSPFAGKT…EAEMIRLLGA (79 aa)) folds into the BRCT domain.

This sequence belongs to the NAD-dependent DNA ligase family. LigA subfamily. Requires Mg(2+) as cofactor. The cofactor is Mn(2+).

The catalysed reaction is NAD(+) + (deoxyribonucleotide)n-3'-hydroxyl + 5'-phospho-(deoxyribonucleotide)m = (deoxyribonucleotide)n+m + AMP + beta-nicotinamide D-nucleotide.. Its function is as follows. DNA ligase that catalyzes the formation of phosphodiester linkages between 5'-phosphoryl and 3'-hydroxyl groups in double-stranded DNA using NAD as a coenzyme and as the energy source for the reaction. It is essential for DNA replication and repair of damaged DNA. The protein is DNA ligase of Salmonella newport (strain SL254).